Consider the following 955-residue polypeptide: 2-oxoglutarate dehydrogenase E1 component (955 aa).

It belongs to the alpha-ketoglutarate dehydrogenase family. Homodimer. Part of the 2-oxoglutarate dehydrogenase (OGDH) complex composed of E1 (2-oxoglutarate dehydrogenase), E2 (dihydrolipoamide succinyltransferase) and E3 (dihydrolipoamide dehydrogenase); the complex contains multiple copies of the three enzymatic components (E1, E2 and E3). It depends on thiamine diphosphate as a cofactor.

The enzyme catalyses N(6)-[(R)-lipoyl]-L-lysyl-[protein] + 2-oxoglutarate + H(+) = N(6)-[(R)-S(8)-succinyldihydrolipoyl]-L-lysyl-[protein] + CO2. In terms of biological role, E1 component of the 2-oxoglutarate dehydrogenase (OGDH) complex which catalyzes the decarboxylation of 2-oxoglutarate, the first step in the conversion of 2-oxoglutarate to succinyl-CoA and CO(2). The polypeptide is 2-oxoglutarate dehydrogenase E1 component (Bacillus cereus (strain 03BB102)).